We begin with the raw amino-acid sequence, 239 residues long: NAD(P)H-hydrate epimerase (239 aa).

The YjeF N-terminal domain occupies 14–220 (AAALDQELMS…EMAEQYNLDI (207 aa)). 64 to 68 (NNGGD) provides a ligand contact to (6S)-NADPHX. Residues asparagine 65 and aspartate 126 each coordinate K(+). (6S)-NADPHX-binding positions include 130-136 (GFSFSGE) and aspartate 159. Serine 162 is a K(+) binding site.

Belongs to the NnrE/AIBP family. K(+) is required as a cofactor.

The protein localises to the cytoplasm. It localises to the mitochondrion. The catalysed reaction is (6R)-NADHX = (6S)-NADHX. It catalyses the reaction (6R)-NADPHX = (6S)-NADPHX. Catalyzes the epimerization of the S- and R-forms of NAD(P)HX, a damaged form of NAD(P)H that is a result of enzymatic or heat-dependent hydration. This is a prerequisite for the S-specific NAD(P)H-hydrate dehydratase to allow the repair of both epimers of NAD(P)HX. The sequence is that of NAD(P)H-hydrate epimerase from Phaeosphaeria nodorum (strain SN15 / ATCC MYA-4574 / FGSC 10173) (Glume blotch fungus).